We begin with the raw amino-acid sequence, 357 residues long: Protein-glutamate methylesterase/protein-glutamine glutaminase 1 (357 aa).

In terms of domain architecture, Response regulatory spans 7–124 (KVLCVDDSAL…REGLLDYTQT (118 aa)). D58 is subject to 4-aspartylphosphate. The 193-residue stretch at 158–350 (LLSTEKLIIV…QRVMAHLATF (193 aa)) folds into the CheB-type methylesterase domain. Residues S170, H196, and D292 contribute to the active site.

Belongs to the CheB family. In terms of processing, phosphorylated by CheA. Phosphorylation of the N-terminal regulatory domain activates the methylesterase activity.

The protein localises to the cytoplasm. The catalysed reaction is [protein]-L-glutamate 5-O-methyl ester + H2O = L-glutamyl-[protein] + methanol + H(+). It catalyses the reaction L-glutaminyl-[protein] + H2O = L-glutamyl-[protein] + NH4(+). Functionally, involved in chemotaxis. Part of a chemotaxis signal transduction system that modulates chemotaxis in response to various stimuli. Catalyzes the demethylation of specific methylglutamate residues introduced into the chemoreceptors (methyl-accepting chemotaxis proteins or MCP) by CheR. Also mediates the irreversible deamidation of specific glutamine residues to glutamic acid. This is Protein-glutamate methylesterase/protein-glutamine glutaminase 1 from Cupriavidus metallidurans (strain ATCC 43123 / DSM 2839 / NBRC 102507 / CH34) (Ralstonia metallidurans).